The sequence spans 413 residues: Divalent metal cation transporter MntH (413 aa).

Transmembrane regions (helical) follow at residues 19 to 39 (LALM…GNFA), 46 to 66 (ASFG…AMLI), 94 to 114 (VWFY…AEFI), 122 to 142 (LVLG…TFLI), 156 to 176 (VIGG…IFSQ), 196 to 216 (AVFL…IYLH), 241 to 261 (IAMT…AAAF), 290 to 310 (IFGL…TLAG), 329 to 349 (AITM…TRIL), 350 to 370 (VMSQ…LLIF), and 389 to 409 (IGWA…VGSL).

Belongs to the NRAMP family.

The protein resides in the cell inner membrane. In terms of biological role, h(+)-stimulated, divalent metal cation uptake system. The chain is Divalent metal cation transporter MntH from Klebsiella pneumoniae subsp. pneumoniae (strain ATCC 700721 / MGH 78578).